The chain runs to 65 residues: Photosystem II reaction center protein Z (65 aa).

Helical transmembrane passes span 11 to 31 (LVLALIIFSFILVLTLPVIFA) and 44 to 64 (WLACRFWFFLVFLIGILDGIF).

It belongs to the PsbZ family. In terms of assembly, PSII is composed of 1 copy each of membrane proteins PsbA, PsbB, PsbC, PsbD, PsbE, PsbF, PsbH, PsbI, PsbJ, PsbK, PsbL, PsbM, PsbT, PsbY, PsbZ, Psb30/Ycf12, at least 3 peripheral proteins of the oxygen-evolving complex and a large number of cofactors. It forms dimeric complexes.

It localises to the plastid. Its subcellular location is the chloroplast thylakoid membrane. In terms of biological role, may control the interaction of photosystem II (PSII) cores with the light-harvesting antenna, regulates electron flow through the 2 photosystem reaction centers. PSII is a light-driven water plastoquinone oxidoreductase, using light energy to abstract electrons from H(2)O, generating a proton gradient subsequently used for ATP formation. The polypeptide is Photosystem II reaction center protein Z (Euglena gracilis).